Here is a 29-residue protein sequence, read N- to C-terminus: Cytochrome b6-f complex subunit 8 (29 aa).

Residues 3–23 (IISLGWSSLLVVFTFSLSLVV) traverse the membrane as a helical segment.

This sequence belongs to the PetN family. The 4 large subunits of the cytochrome b6-f complex are cytochrome b6, subunit IV (17 kDa polypeptide, PetD), cytochrome f and the Rieske protein, while the 4 small subunits are PetG, PetL, PetM and PetN. The complex functions as a dimer.

Its subcellular location is the plastid. The protein localises to the chloroplast thylakoid membrane. Functionally, component of the cytochrome b6-f complex, which mediates electron transfer between photosystem II (PSII) and photosystem I (PSI), cyclic electron flow around PSI, and state transitions. The sequence is that of Cytochrome b6-f complex subunit 8 from Rhodomonas salina (Cryptomonas salina).